The sequence spans 532 residues: Ankyrin repeat-containing protein At2g01680 (532 aa).

7 ANK repeats span residues 9-38 (LTHQ…GDEL), 58-89 (AGET…TVKI), 93-122 (SDMN…ELCR), 127-156 (SNTS…SCAM), 161-190 (NGKT…AIVG), 195-224 (KGQT…TILN), and 229-259 (KGNT…EVNA). 4 helical membrane-spanning segments follow: residues 354-374 (ITVV…NLPG), 396-416 (VFCL…VVQI), 436-456 (LMWA…FAVV), and 467-487 (ITLL…YFVF).

It is found in the membrane. The polypeptide is Ankyrin repeat-containing protein At2g01680 (Arabidopsis thaliana (Mouse-ear cress)).